Here is a 162-residue protein sequence, read N- to C-terminus: Shikimate kinase (162 aa).

ATP is bound at residue 11–16 (GSGKSS). Ser15 provides a ligand contact to Mg(2+). Substrate contacts are provided by Asp33, Arg57, and Gly80. The interval 109–123 (NQKEREKRPLLNNLT) is LID domain. Residue Arg116 coordinates ATP. Arg132 contributes to the substrate binding site.

Belongs to the shikimate kinase family. In terms of assembly, monomer. Requires Mg(2+) as cofactor.

It is found in the cytoplasm. The catalysed reaction is shikimate + ATP = 3-phosphoshikimate + ADP + H(+). It functions in the pathway metabolic intermediate biosynthesis; chorismate biosynthesis; chorismate from D-erythrose 4-phosphate and phosphoenolpyruvate: step 5/7. Its function is as follows. Catalyzes the specific phosphorylation of the 3-hydroxyl group of shikimic acid using ATP as a cosubstrate. The polypeptide is Shikimate kinase (aroK) (Helicobacter pylori (strain ATCC 700392 / 26695) (Campylobacter pylori)).